Here is a 362-residue protein sequence, read N- to C-terminus: Protein-glutamate methylesterase/protein-glutamine glutaminase 1 (362 aa).

The Response regulatory domain maps to 10 to 127; that stretch reads RVLVVDDSSF…ADAQRVFREE (118 aa). Aspartate 61 is modified (4-aspartylphosphate). The region spanning 163 to 357 is the CheB-type methylesterase domain; it reads PRPSQALAGK…LPLTQIGSEI (195 aa). Active-site residues include serine 181, histidine 208, and aspartate 306.

The protein belongs to the CheB family. In terms of processing, phosphorylated by CheA. Phosphorylation of the N-terminal regulatory domain activates the methylesterase activity.

The protein resides in the cytoplasm. It carries out the reaction [protein]-L-glutamate 5-O-methyl ester + H2O = L-glutamyl-[protein] + methanol + H(+). The enzyme catalyses L-glutaminyl-[protein] + H2O = L-glutamyl-[protein] + NH4(+). Functionally, involved in chemotaxis. Part of a chemotaxis signal transduction system that modulates chemotaxis in response to various stimuli. Catalyzes the demethylation of specific methylglutamate residues introduced into the chemoreceptors (methyl-accepting chemotaxis proteins or MCP) by CheR. Also mediates the irreversible deamidation of specific glutamine residues to glutamic acid. In Geobacter sulfurreducens (strain ATCC 51573 / DSM 12127 / PCA), this protein is Protein-glutamate methylesterase/protein-glutamine glutaminase 1.